A 147-amino-acid polypeptide reads, in one-letter code: MWPPTSITPFNPFQIPLLNTIILISSGVSVTWAHHAIMENNNSQMTQGLFITIILGIYFTILQAYEYFEAPFTIADSIYGSTFFMATGFHGLHVIIGTLFLLICLIRHLNNHFSSNHHFGFEAAAWYWHFVDVVWLFLYISIYWWGN.

Helical transmembrane passes span 13-33 (FQIPLLNTIILISSGVSVTWA), 48-68 (GLFITIILGIYFTILQAYEYF), 83-103 (FFMATGFHGLHVIIGTLFLLI), and 125-145 (AWYWHFVDVVWLFLYISIYWW).

Belongs to the cytochrome c oxidase subunit 3 family. As to quaternary structure, component of the cytochrome c oxidase (complex IV, CIV), a multisubunit enzyme composed of a catalytic core of 3 subunits and several supernumerary subunits. The complex exists as a monomer or a dimer and forms supercomplexes (SCs) in the inner mitochondrial membrane with ubiquinol-cytochrome c oxidoreductase (cytochrome b-c1 complex, complex III, CIII).

Its subcellular location is the mitochondrion inner membrane. The catalysed reaction is 4 Fe(II)-[cytochrome c] + O2 + 8 H(+)(in) = 4 Fe(III)-[cytochrome c] + 2 H2O + 4 H(+)(out). Functionally, component of the cytochrome c oxidase, the last enzyme in the mitochondrial electron transport chain which drives oxidative phosphorylation. The respiratory chain contains 3 multisubunit complexes succinate dehydrogenase (complex II, CII), ubiquinol-cytochrome c oxidoreductase (cytochrome b-c1 complex, complex III, CIII) and cytochrome c oxidase (complex IV, CIV), that cooperate to transfer electrons derived from NADH and succinate to molecular oxygen, creating an electrochemical gradient over the inner membrane that drives transmembrane transport and the ATP synthase. Cytochrome c oxidase is the component of the respiratory chain that catalyzes the reduction of oxygen to water. Electrons originating from reduced cytochrome c in the intermembrane space (IMS) are transferred via the dinuclear copper A center (CU(A)) of subunit 2 and heme A of subunit 1 to the active site in subunit 1, a binuclear center (BNC) formed by heme A3 and copper B (CU(B)). The BNC reduces molecular oxygen to 2 water molecules using 4 electrons from cytochrome c in the IMS and 4 protons from the mitochondrial matrix. The chain is Cytochrome c oxidase subunit 3 (COIII) from Spodoptera frugiperda (Fall armyworm).